The following is a 2624-amino-acid chain: Highly reducing polyketide synthase ALT1 (2624 aa).

In terms of domain architecture, Ketosynthase family 3 (KS3) spans 28–449 (VLPLAIVGMG…GSNAHCILES (422 aa)). The active-site For beta-ketoacyl synthase activity is the C200. The tract at residues 289 to 308 (VRGTSSNSDGKTPGMSMPSS) is disordered. Catalysis depends on for beta-ketoacyl synthase activity residues H335 and H372. Over residues 523–544 (ESYSNHHTLTETTNPSNNTATN) the composition is skewed to polar residues. The segment at 523 to 545 (ESYSNHHTLTETTNPSNNTATNG) is disordered. Residues 639–945 (VFTGQGAQWA…GYTPAMIRGK (307 aa)) are malonyl-CoA:ACP transacylase (MAT) domain. The tract at residues 1009–1140 (HELLGSQTLE…GQVRPGRDAH (132 aa)) is N-terminal hotdog fold. A dehydratase (DH) domain region spans residues 1009–1301 (HELLGSQTLE…LEGGKFSPIE (293 aa)). The 298-residue stretch at 1009-1306 (HELLGSQTLE…FSPIEVDDGI (298 aa)) folds into the PKS/mFAS DH domain. H1041 serves as the catalytic Proton acceptor; for dehydratase activity. The interval 1157–1306 (QYPRPVDSLY…FSPIEVDDGI (150 aa)) is C-terminal hotdog fold. Catalysis depends on D1217, which acts as the Proton donor; for dehydratase activity. Positions 1493–1599 (LEIGAGTGGA…RKLLAPEGYL (107 aa)) are methyltransferase (CMet) domain. The enoyl reductase (ER) (ER) domain stretch occupies residues 1895–2205 (GLLQTLKWVD…KGTHLGKIVV (311 aa)). Residues 2230-2509 (TYVLVGGLGG…DSDALRFFIT (280 aa)) are ketoreductase (KR) domain. The 79-residue stretch at 2522–2600 (ASLDLVTRTI…GLAKLILDAL (79 aa)) folds into the Carrier domain. Residue S2559 is modified to O-(pantetheine 4'-phosphoryl)serine.

It participates in mycotoxin biosynthesis. Functionally, highly reducing polyketide synthase; part of the gene cluster that mediates the biosynthesis of the host-selective toxins (HSTs) AAL-toxins, sphinganine-analog mycotoxins responsible for Alternaria stem canker on tomato by the tomato pathotype. The biosynthesis starts with the polyketide synthase ALT1-catalyzed C-16 carbon chain assembly from one starter acetyl-CoA unit with malonyl-CoA extender units. ALT1 also selectively transfers methyl groups at the first and the third cycle of chain elongation for AAL toxin. The C-16 polyketide chain is released from the enzyme by a nucleophilic attack of a carbanion, which is derived from R-carbon of glycin by decarboxylation, on the carbonyl carbon of polyketide acyl chain. This step is probably catalyzed by a pyridoxal 5'-phosphate-dependent aminoacyl transferase ALT4. The respective functions of the other enzymes encoded by the cluster have still to be elucidated. The sphingosine N-acyltransferase-like protein ALT7 seems not to act as a resistance/self-tolerance factor against the toxin in the toxin biosynthetic gene cluster, contrary to what is expected. The sequence is that of Highly reducing polyketide synthase ALT1 from Alternaria alternata (Alternaria rot fungus).